The chain runs to 252 residues: Small ribosomal subunit protein eS1B (252 aa).

Ala2 is subject to N-acetylalanine; partial. A Phosphoserine modification is found at Ser251.

This sequence belongs to the eukaryotic ribosomal protein eS1 family. As to quaternary structure, component of the small ribosomal subunit (SSU). Mature yeast ribosomes consist of a small (40S) and a large (60S) subunit. The 40S small subunit contains 1 molecule of ribosomal RNA (18S rRNA) and at least 33 different proteins. The large 60S subunit contains 3 rRNA molecules (25S, 5.8S and 5S rRNA) and at least 46 different proteins. eS1 interacts directly with uS11 and eS26, which form part of the mRNA exit tunnel.

The protein resides in the cytoplasm. In terms of biological role, component of the ribosome, a large ribonucleoprotein complex responsible for the synthesis of proteins in the cell. The small ribosomal subunit (SSU) binds messenger RNAs (mRNAs) and translates the encoded message by selecting cognate aminoacyl-transfer RNA (tRNA) molecules. The large subunit (LSU) contains the ribosomal catalytic site termed the peptidyl transferase center (PTC), which catalyzes the formation of peptide bonds, thereby polymerizing the amino acids delivered by tRNAs into a polypeptide chain. The nascent polypeptides leave the ribosome through a tunnel in the LSU and interact with protein factors that function in enzymatic processing, targeting, and the membrane insertion of nascent chains at the exit of the ribosomal tunnel. The protein is Small ribosomal subunit protein eS1B (rps102) of Schizosaccharomyces pombe (strain 972 / ATCC 24843) (Fission yeast).